The sequence spans 735 residues: Peroxisomal multifunctional enzyme type 2 (735 aa).

Positions 1–305 (MASPLRFDGR…IEVLHKIDSE (305 aa)) are (3R)-hydroxyacyl-CoA dehydrogenase. NAD(+) contacts are provided by residues 16–40 (GAGG…VVND), leucine 21, and aspartate 40. The residue at position 46 (lysine 46) is an N6-acetyllysine; alternate. N6-succinyllysine; alternate is present on lysine 46. Serine 52 bears the Phosphoserine mark. Residues lysine 57 and lysine 68 each carry the N6-succinyllysine modification. Position 75 to 76 (75 to 76 (SV)) interacts with NAD(+). Residue lysine 84 is modified to N6-succinyllysine. Residue asparagine 99 participates in NAD(+) binding. Substrate is bound at residue serine 151. Residue tyrosine 164 is the Proton acceptor of the active site. Residues 164–168 (YSAAK) and 196–199 (AGSR) each bind NAD(+). Threonine 265 is modified (phosphothreonine). The residue at position 275 (lysine 275) is an N6-succinyllysine. Serine 304 and serine 308 each carry phosphoserine. The enoyl-CoA hydratase 2 stretch occupies residues 321–621 (SGFAGVVGHK…AQTPSEGGAL (301 aa)). The residue at position 355 (lysine 355) is an N6-succinyllysine. (3R)-3-hydroxydecanoyl-CoA is bound at residue 405-406 (HG). Residue lysine 423 is modified to N6-succinyllysine. Residues lysine 434, 509-514 (DSNPLH), glycine 532, and phenylalanine 562 contribute to the (3R)-3-hydroxydecanoyl-CoA site. In terms of domain architecture, MaoC-like spans 483 to 599 (VPSRPPDAVL…QETGDIVISN (117 aa)). Lysine 564 carries the N6-acetyllysine modification. 2 positions are modified to N6-succinyllysine: lysine 578 and lysine 662. The 113-residue stretch at 623–735 (SALVFGEIGR…QMILKDYAKL (113 aa)) folds into the SCP2 domain. Lysine 668 bears the N6-acetyllysine mark. The substrate site is built by glutamine 705 and glutamine 723. Lysine 724 bears the N6-succinyllysine mark. The Microbody targeting signal signature appears at 733–735 (AKL).

Belongs to the short-chain dehydrogenases/reductases (SDR) family. Homodimer.

The protein resides in the peroxisome. The catalysed reaction is a (3R)-3-hydroxyacyl-CoA + NAD(+) = a 3-oxoacyl-CoA + NADH + H(+). The enzyme catalyses (24R,25R)-3alpha,7alpha,12alpha,24-tetrahydroxy-5beta-cholestan-26-oyl-CoA = (24E)-3alpha,7alpha,12alpha-trihydroxy-5beta-cholest-24-en-26-oyl-CoA + H2O. It catalyses the reaction a (3R)-3-hydroxyacyl-CoA = a (2E)-enoyl-CoA + H2O. It carries out the reaction (2E)-octenoyl-CoA + H2O = (3R)-hydroxyoctanoyl-CoA. The catalysed reaction is (3R)-hydroxyoctanoyl-CoA + NAD(+) = 3-oxooctanoyl-CoA + NADH + H(+). The enzyme catalyses (3R)-hydroxyhexadecanoyl-CoA + NAD(+) = 3-oxohexadecanoyl-CoA + NADH + H(+). It catalyses the reaction (2E)-hexadecenedioyl-CoA + H2O = (3R)-hydroxyhexadecanedioyl-CoA. It carries out the reaction (3R)-hydroxyhexadecanedioyl-CoA + NAD(+) = 3-oxohexadecanedioyl-CoA + NADH + H(+). The catalysed reaction is (3R)-hydroxyhexadecanoyl-CoA = (2E)-hexadecenoyl-CoA + H2O. The enzyme catalyses (3R)-3-hydroxydecanoyl-CoA = (2E)-decenoyl-CoA + H2O. It catalyses the reaction (3R)-3-hydroxydecanoyl-CoA + NAD(+) = 3-oxodecanoyl-CoA + NADH + H(+). It carries out the reaction (24R,25R)-3alpha,7alpha,12alpha,24-tetrahydroxy-5beta-cholestan-26-oyl-CoA + NAD(+) = 3alpha,7alpha,12alpha-trihydroxy-24-oxo-5beta-cholestan-26-oyl-CoA + NADH + H(+). It participates in lipid metabolism; fatty acid beta-oxidation. Functionally, bifunctional enzyme acting on the peroxisomal fatty acid beta-oxidation pathway. Catalyzes two of the four reactions in fatty acid degradation: hydration of 2-enoyl-CoA (trans-2-enoyl-CoA) to produce (3R)-3-hydroxyacyl-CoA, and dehydrogenation of (3R)-3-hydroxyacyl-CoA to produce 3-ketoacyl-CoA (3-oxoacyl-CoA), which is further metabolized by SCPx. Can use straight-chain and branched-chain fatty acids, as well as bile acid intermediates as substrates. This chain is Peroxisomal multifunctional enzyme type 2, found in Rattus norvegicus (Rat).